A 505-amino-acid chain; its full sequence is MAQKLQADEISSIIKERIEDFELKIDVEETGKVISFGDGVAKVFGLNNVMAGEMLEFDNGDKGMALNLEETNVGVVVLGRGEGIREGSSVKRLGQLLKAPVGEALVGRVINAIGEPIDGKGPIEATEYRYVEEKAPGIMARKSVHEPLQTGIKAIDALVPIGRGQRELIIGDRQTGKTTVAIDTIINQKGQDVVCIYVAVGQKQSTVAQVVKKLEEHGAMDYTIVVNAGASEPAALQFLAPYTGVTIGEYFRDNGKHALIVYDDLSKHAVAYREMSLILRRPPGREAYPGDVFYLHSRLLERAAKLNDKLGAGSLTALPIIETQAGDVSAYIPTNVISITDGQIFLESDLFNAGIRPAINVGISVSRVGGAAQIKAMKQVAGTLRLDLAQYRELEAFAQFASDLDEASRKQLERGMRMVEILKQPPYSPLPVEKQVVIIYAGANGFLDDIEVSAIGKFEYELYSFIEAKYPQIFELIRERKALDDEIKELLNKAIEEFKASFSAE.

Residue 171–178 (GDRQTGKT) coordinates ATP.

Belongs to the ATPase alpha/beta chains family. F-type ATPases have 2 components, CF(1) - the catalytic core - and CF(0) - the membrane proton channel. CF(1) has five subunits: alpha(3), beta(3), gamma(1), delta(1), epsilon(1). CF(0) has three main subunits: a(1), b(2) and c(9-12). The alpha and beta chains form an alternating ring which encloses part of the gamma chain. CF(1) is attached to CF(0) by a central stalk formed by the gamma and epsilon chains, while a peripheral stalk is formed by the delta and b chains.

Its subcellular location is the cell inner membrane. The enzyme catalyses ATP + H2O + 4 H(+)(in) = ADP + phosphate + 5 H(+)(out). Its function is as follows. Produces ATP from ADP in the presence of a proton gradient across the membrane. The alpha chain is a regulatory subunit. The protein is ATP synthase subunit alpha of Nitratiruptor sp. (strain SB155-2).